The chain runs to 396 residues: S-adenosylmethionine synthase (396 aa).

His16 is a binding site for ATP. A Mg(2+)-binding site is contributed by Asp18. Glu44 is a binding site for K(+). Positions 57 and 100 each coordinate L-methionine. Positions 100 to 110 are flexible loop; sequence QSVDIAQGVDR. Residues 165 to 167, Asp240, 246 to 247, Ala263, and Lys267 contribute to the ATP site; these read DAK and RK. An L-methionine-binding site is contributed by Asp240. Residue Lys271 participates in L-methionine binding.

Belongs to the AdoMet synthase family. In terms of assembly, homotetramer; dimer of dimers. It depends on Mg(2+) as a cofactor. Requires K(+) as cofactor.

The protein localises to the cytoplasm. The enzyme catalyses L-methionine + ATP + H2O = S-adenosyl-L-methionine + phosphate + diphosphate. It participates in amino-acid biosynthesis; S-adenosyl-L-methionine biosynthesis; S-adenosyl-L-methionine from L-methionine: step 1/1. Catalyzes the formation of S-adenosylmethionine (AdoMet) from methionine and ATP. The overall synthetic reaction is composed of two sequential steps, AdoMet formation and the subsequent tripolyphosphate hydrolysis which occurs prior to release of AdoMet from the enzyme. The polypeptide is S-adenosylmethionine synthase (Pseudomonas syringae pv. tomato (strain ATCC BAA-871 / DC3000)).